A 421-amino-acid chain; its full sequence is Serine--tRNA ligase (421 aa).

230–232 lines the L-serine pocket; the sequence is TAE. Residue 259–261 participates in ATP binding; it reads RRE. E282 provides a ligand contact to L-serine. 346–349 contributes to the ATP binding site; it reads EISS. S381 serves as a coordination point for L-serine.

It belongs to the class-II aminoacyl-tRNA synthetase family. Type-1 seryl-tRNA synthetase subfamily. As to quaternary structure, homodimer. The tRNA molecule binds across the dimer.

The protein localises to the cytoplasm. The catalysed reaction is tRNA(Ser) + L-serine + ATP = L-seryl-tRNA(Ser) + AMP + diphosphate + H(+). It catalyses the reaction tRNA(Sec) + L-serine + ATP = L-seryl-tRNA(Sec) + AMP + diphosphate + H(+). Its pathway is aminoacyl-tRNA biosynthesis; selenocysteinyl-tRNA(Sec) biosynthesis; L-seryl-tRNA(Sec) from L-serine and tRNA(Sec): step 1/1. Its function is as follows. Catalyzes the attachment of serine to tRNA(Ser). Is also able to aminoacylate tRNA(Sec) with serine, to form the misacylated tRNA L-seryl-tRNA(Sec), which will be further converted into selenocysteinyl-tRNA(Sec). The chain is Serine--tRNA ligase from Acidithiobacillus ferrooxidans (strain ATCC 23270 / DSM 14882 / CIP 104768 / NCIMB 8455) (Ferrobacillus ferrooxidans (strain ATCC 23270)).